The sequence spans 262 residues: Intercellular adhesion molecule 4 (262 aa).

A signal peptide spans 1 to 22 (MESALLLPSLLLVAAYPRGGSP). Topologically, residues 23–231 (QQEWMQSPPA…LTVLALSPAS (209 aa)) are extracellular. 2 Ig-like C2-type domains span residues 54–116 (GGSA…TREA) and 138–209 (GHKY…LNLD). 3 N-linked (GlcNAc...) asparagine glycosylation sites follow: Asn60, Asn84, and Asn182. Disulfide bonds link Cys61-Cys105, Cys61-Cys109, Cys65-Cys109, and Cys145-Cys202. A helical membrane pass occupies residues 232 to 252 (IALASTSIATLVGILLAVGAV). Residues 253–262 (YVRKYLAVQT) are Cytoplasmic-facing.

This sequence belongs to the immunoglobulin superfamily. ICAM family.

The protein localises to the cell membrane. It localises to the secreted. Adhesion molecule that binds to leukocyte adhesion LFA-1 protein LFA-1 (integrin alpha-L/beta-2). ICAM4 is also a ligand for alpha-4/beta-1 and alpha-V integrins. Isoform 2 may modulate binding of membrane-associated ICAM4. This Mus musculus (Mouse) protein is Intercellular adhesion molecule 4 (Icam4).